A 609-amino-acid chain; its full sequence is DNA mismatch repair protein MutL (609 aa).

A disordered region spans residues 364–386 (SVNSKPTDYRPAMSPSFKSTPNT).

It belongs to the DNA mismatch repair MutL/HexB family.

Functionally, this protein is involved in the repair of mismatches in DNA. It is required for dam-dependent methyl-directed DNA mismatch repair. May act as a 'molecular matchmaker', a protein that promotes the formation of a stable complex between two or more DNA-binding proteins in an ATP-dependent manner without itself being part of a final effector complex. In Rickettsia akari (strain Hartford), this protein is DNA mismatch repair protein MutL.